A 188-amino-acid chain; its full sequence is Type II secretion system protein H (188 aa).

Residues 1–10 constitute a propeptide, leader sequence; sequence MKRSTRKQQG. F11 carries the post-translational modification N-methylphenylalanine. The helical transmembrane segment at 13–35 threads the bilayer; that stretch reads LLEMMLVVLLAGIAAGMVVMAFP.

The protein belongs to the GSP H family. As to quaternary structure, type II secretion is composed of four main components: the outer membrane complex, the inner membrane complex, the cytoplasmic secretion ATPase and the periplasm-spanning pseudopilus. Interacts with core component OutG. In terms of processing, cleaved by prepilin peptidase. Methylated by prepilin peptidase at the amino group of the N-terminal phenylalanine once the leader sequence is cleaved by prepilin peptidase.

Its subcellular location is the cell inner membrane. In terms of biological role, component of the type II secretion system required for the energy-dependent secretion of extracellular factors such as proteases and toxins from the periplasm. Part of the pseudopilus tip complex that is critical for the recognition and binding of secretion substrates. This is Type II secretion system protein H (outH) from Pectobacterium carotovorum subsp. carotovorum (Erwinia carotovora subsp. carotovora).